A 218-amino-acid polypeptide reads, in one-letter code: Large ribosomal subunit protein bL25 (218 aa).

Residues Ala185 to Glu218 form a disordered region. The span at Glu190 to Ala200 shows a compositional bias: acidic residues. The segment covering Glu203–Arg212 has biased composition (basic and acidic residues).

The protein belongs to the bacterial ribosomal protein bL25 family. CTC subfamily. Part of the 50S ribosomal subunit; part of the 5S rRNA/L5/L18/L25 subcomplex. Contacts the 5S rRNA. Binds to the 5S rRNA independently of L5 and L18.

This is one of the proteins that binds to the 5S RNA in the ribosome where it forms part of the central protuberance. In Roseiflexus castenholzii (strain DSM 13941 / HLO8), this protein is Large ribosomal subunit protein bL25.